The sequence spans 356 residues: Cobalt-precorrin-5B C(1)-methyltransferase (356 aa).

This sequence belongs to the CbiD family.

It catalyses the reaction Co-precorrin-5B + S-adenosyl-L-methionine = Co-precorrin-6A + S-adenosyl-L-homocysteine. It participates in cofactor biosynthesis; adenosylcobalamin biosynthesis; cob(II)yrinate a,c-diamide from sirohydrochlorin (anaerobic route): step 6/10. In terms of biological role, catalyzes the methylation of C-1 in cobalt-precorrin-5B to form cobalt-precorrin-6A. The polypeptide is Cobalt-precorrin-5B C(1)-methyltransferase (Geobacter sp. (strain M21)).